A 431-amino-acid chain; its full sequence is MVSLEKNDHLMLARQLPLKSVALILAGGRGTRLKDLTNKRAKPAVHFGGKFRIIDFALSNCINSGIRRMGVITQYQSHTLVQHIQRGWSFFNEEMNEFVDLLPAQQRMKGENWYRGTADAVTQNLDIIRRYKAEYVVILAGDHIYKQDYSRMLIDHVEKGARCTVACMPVPIEEASAFGVMAVDENDKIIEFVEKPANPPSMPNDPSKSLASMGIYVFDADYLYELLEEDDRDENSSHDFGKDLIPKITEAGLAYAHPFPLSCVQSDPDAEPYWRDVGTLKAYWKANLDLASVVPELDMYDRNWPIRTYNESLPPAKFVQDRSGSHGMTLNSLVSGGCVISGSVVVQSVLFSRVRVNSFCNIDSAVLLPEVWVGRSCRLRRCVIDRACVIPEGMVIGENAEEDARRFYRSEEGIVLVTREMLRKLGHKQER.

Lysine 39 is a binding site for beta-D-fructose 1,6-bisphosphate. Residues arginine 40, histidine 46, and arginine 52 each coordinate AMP. Position 114 (tyrosine 114) interacts with alpha-D-glucose 1-phosphate. Residue arginine 130 coordinates AMP. Alpha-D-glucose 1-phosphate contacts are provided by residues glycine 179, 194–195, and serine 212; that span reads EK. AMP-binding residues include glutamate 370 and arginine 386. Beta-D-fructose 1,6-bisphosphate-binding positions include 419–423 and 429–431; these read REMLR and QER.

It belongs to the bacterial/plant glucose-1-phosphate adenylyltransferase family. Homotetramer.

It catalyses the reaction alpha-D-glucose 1-phosphate + ATP + H(+) = ADP-alpha-D-glucose + diphosphate. The protein operates within glycan biosynthesis; glycogen biosynthesis. With respect to regulation, allosterically activated by fructose-1,6-bisphosphate (F16BP) and inhibited by AMP. Functionally, involved in the biosynthesis of ADP-glucose, a building block required for the elongation reactions to produce glycogen. Catalyzes the reaction between ATP and alpha-D-glucose 1-phosphate (G1P) to produce pyrophosphate and ADP-Glc. In Shigella boydii serotype 18 (strain CDC 3083-94 / BS512), this protein is Glucose-1-phosphate adenylyltransferase.